A 344-amino-acid polypeptide reads, in one-letter code: Tripartite motif-containing protein 44 (344 aa).

Disordered regions lie at residues 1 to 25 (MASG…EPDE) and 66 to 165 (AWTP…EFDP). The span at 75 to 92 (GAGKEEAEVKVEQEREIE) shows a compositional bias: basic and acidic residues. The segment covering 93 to 165 (SEAGEESESE…ETEAESEFDP (73 aa)) has biased composition (acidic residues). A B box-type zinc finger spans residues 174-215 (VAKRKCPDHGLDLSTYCQEDRQLICVLCPVIGAHQGHQLSTL). 4 residues coordinate Zn(2+): Cys179, His182, Cys201, and His207. Residues 290–325 (AHVTEILADIQSHMDRLMTQMAQAKEQLDTSNESAE) adopt a coiled-coil conformation. Positions 309–344 (QMAQAKEQLDTSNESAEPKAEGDEEGPSGASEEEDT) are disordered. The segment covering 330 to 344 (GDEEGPSGASEEEDT) has biased composition (acidic residues). Ser336 and Ser339 each carry phosphoserine.

Interacts (via coiled coil) with TRIM17 (via coiled coil). In terms of tissue distribution, highly expressed in testis.

May play a role in the process of differentiation and maturation of neuronal cells. May regulate the activity of TRIM17. Is a negative regulator of PAX6 expression. The sequence is that of Tripartite motif-containing protein 44 (TRIM44) from Homo sapiens (Human).